The primary structure comprises 251 residues: MSLKPFTYPFPETRFLHAGTNVYKFKIRYGNSIRGEEIEDKGVIIQELEDSIRAVLANMDSLQPFVTEHFIVFPYKSKWERVSHLKFKHGEIILTPYPFVFTLYIEMKCFAESLPSGKPTDDIPLELVLTAKEAEEATMRKRKLMEEPSTPSRPGPHRAKMETWSEASSTKKALKEHKRSWGEDSQQDTPASDSTAVTEQDPMLGHSLPGLVVPPLEHSNPPPLKEPAARGFLGFLSALFPFRYFFRKSTQ.

Residues 1-227 lie on the Nuclear side of the membrane; the sequence is MSLKPFTYPF…HSNPPPLKEP (227 aa). Residues 140 to 225 are disordered; the sequence is RKRKLMEEPS…LEHSNPPPLK (86 aa). Positions 183–198 are enriched in polar residues; sequence EDSQQDTPASDSTAVT. A helical transmembrane segment spans residues 228–246; it reads AARGFLGFLSALFPFRYFF. Residues 247–251 lie on the Perinuclear space side of the membrane; sequence RKSTQ.

Belongs to the MAJIN family. As to quaternary structure, component of the MAJIN-TERB1-TERB2 complex, composed of MAJIN, TERB1 and TERB2.

It is found in the nucleus inner membrane. It localises to the chromosome. Its subcellular location is the telomere. Functionally, meiosis-specific telomere-associated protein involved in meiotic telomere attachment to the nucleus inner membrane, a crucial step for homologous pairing and synapsis. Component of the MAJIN-TERB1-TERB2 complex, which promotes telomere cap exchange by mediating attachment of telomeric DNA to the inner nuclear membrane and replacement of the protective cap of telomeric chromosomes: in early meiosis, the MAJIN-TERB1-TERB2 complex associates with telomeric DNA and the shelterin/telosome complex. During prophase, the complex matures and promotes release of the shelterin/telosome complex from telomeric DNA. In the complex, MAJIN acts as the anchoring subunit to the nucleus inner membrane. MAJIN shows DNA-binding activity, possibly for the stabilization of telomere attachment on the nucleus inner membrane. The chain is Membrane-anchored junction protein from Rattus norvegicus (Rat).